A 157-amino-acid chain; its full sequence is Transcriptional regulator MraZ (157 aa).

2 SpoVT-AbrB domains span residues 7 to 54 (TYTM…GTSL) and 83 to 126 (TEML…EPER).

The protein belongs to the MraZ family. Forms oligomers.

The protein resides in the cytoplasm. The protein localises to the nucleoid. This Azorhizobium caulinodans (strain ATCC 43989 / DSM 5975 / JCM 20966 / LMG 6465 / NBRC 14845 / NCIMB 13405 / ORS 571) protein is Transcriptional regulator MraZ.